A 774-amino-acid polypeptide reads, in one-letter code: Multiple C2 domain and transmembrane region protein 11 (774 aa).

Over residues 1-12 (MAVNGTGNGTGD) the composition is skewed to gly residues. Residues 1 to 30 (MAVNGTGNGTGDGDFSLKETSPNIGNGGVN) form a disordered region. 3 consecutive C2 domains span residues 9-145 (GTGD…PQWY), 184-307 (VTGE…SLWY), and 338-471 (LDES…THSY). The Ca(2+) site is built by Asp62, Asn110, Asp112, and Asp118. Helical transmembrane passes span 608-628 (LFVV…CFVF) and 722-742 (FVSC…FLAF).

It belongs to the MCTP family. Requires Ca(2+) as cofactor. Observed in flowers.

Its subcellular location is the endoplasmic reticulum membrane. In terms of biological role, may function as a signaling molecule by regulating the trafficking of other regulators. The polypeptide is Multiple C2 domain and transmembrane region protein 11 (Arabidopsis thaliana (Mouse-ear cress)).